A 93-amino-acid polypeptide reads, in one-letter code: Small ribosomal subunit protein uS19 (93 aa).

Belongs to the universal ribosomal protein uS19 family.

Protein S19 forms a complex with S13 that binds strongly to the 16S ribosomal RNA. This Alkaliphilus metalliredigens (strain QYMF) protein is Small ribosomal subunit protein uS19.